The primary structure comprises 263 residues: Acetylglutamate kinase (263 aa).

Residues G49–G50, R71, and N163 each bind substrate.

The protein belongs to the acetylglutamate kinase family. ArgB subfamily.

Its subcellular location is the cytoplasm. The catalysed reaction is N-acetyl-L-glutamate + ATP = N-acetyl-L-glutamyl 5-phosphate + ADP. It participates in amino-acid biosynthesis; L-arginine biosynthesis; N(2)-acetyl-L-ornithine from L-glutamate: step 2/4. Functionally, catalyzes the ATP-dependent phosphorylation of N-acetyl-L-glutamate. This is Acetylglutamate kinase from Moritella abyssi.